Here is a 204-residue protein sequence, read N- to C-terminus: Histone chaperone ASF1A (204 aa).

The segment at 1–156 (MAKVQVNNVV…TRFHINWEDN (156 aa)) is interaction with histone H3, CHAF1B, and HIRA. A Required for interaction with HIRA motif is present at residues 31–37 (IEDLSED). Residues 155 to 204 (DNTEKLEDAESSNPNLQSLLSTDALPSASKGWSTSENSLNVMLESHMDCM) form a required for interaction with HIRA region. Serine 192 is subject to Phosphoserine.

The protein belongs to the ASF1 family. As to quaternary structure, interacts with histone H3 (via C-terminus), including histone H3.1, H3.2 and H3.3, and histone H4; the interaction with H3 is direct. Probably interacts with the heterodimeric form of H3-H4 taking the place of the second dimer. Interacts with the CHAF1A, CHAF1B and RBBP4 subunits of the CAF-1 complex. Interacts with CABIN1, HAT1, HIRA, NASP, TAF1 and UBN1. Found in a soluble complex with NASP and histones H3 and H4; the interaction with NASP is probably indirect and mediated by H3-H4. Interacts with CDAN1. Found in a cytosolic complex with IPO4 and histones H3 and H4. Interacts with CREBBP. In terms of processing, phosphorylated by TLK1 and TLK2. Highly phosphorylated in S-phase and at lower levels in M-phase. TLK2-mediated phosphorylation at Ser-192 prevents proteasome-dependent degradation. Phosphorylation at Ser-192 by PRKDC in response to DNA damage promotes the histone chaperone activity and ability to replace histones at double-strand breaks (DSBs) at stalled or collapsed replication forks, leading to RAD51 recruitment.

The protein resides in the nucleus. It is found in the chromosome. Functionally, histone chaperone that facilitates histone deposition and histone exchange and removal during nucleosome assembly and disassembly. Cooperates with chromatin assembly factor 1 (CAF-1) to promote replication-dependent chromatin assembly and with HIRA to promote replication-independent chromatin assembly. Promotes homologous recombination-mediated repair of double-strand breaks (DSBs) at stalled or collapsed replication forks: acts by mediating histone replacement at DSBs, leading to recruitment of the MMS22L-TONSL complex and subsequent loading of RAD51. Also involved in the nuclear import of the histone H3-H4 dimer together with importin-4 (IPO4): specifically recognizes and binds newly synthesized histones with the monomethylation of H3 'Lys-9' and acetylation at 'Lys-14' (H3K9me1K14ac) marks, and diacetylation at 'Lys-5' and 'Lys-12' of H4 (H4K5K12ac) marks in the cytosol. Required for the formation of senescence-associated heterochromatin foci (SAHF) and efficient senescence-associated cell cycle exit. This Mus musculus (Mouse) protein is Histone chaperone ASF1A.